The sequence spans 428 residues: Adenylosuccinate synthetase (428 aa).

Residues 12-18 (GDEGKGK) and 40-42 (GHS) each bind GTP. The active-site Proton acceptor is Asp-13. Residues Asp-13 and Gly-40 each coordinate Mg(2+). Residues 13-16 (DEGK), 38-41 (NAGH), Thr-128, Arg-142, Gln-223, Thr-238, and Arg-302 each bind IMP. Residue His-41 is the Proton donor of the active site. 298–304 (VTTGRPR) is a binding site for substrate. GTP is bound by residues Arg-304, 330–332 (KLD), and 412–414 (GTG).

Belongs to the adenylosuccinate synthetase family. Homodimer. It depends on Mg(2+) as a cofactor.

Its subcellular location is the cytoplasm. It carries out the reaction IMP + L-aspartate + GTP = N(6)-(1,2-dicarboxyethyl)-AMP + GDP + phosphate + 2 H(+). It participates in purine metabolism; AMP biosynthesis via de novo pathway; AMP from IMP: step 1/2. Plays an important role in the de novo pathway of purine nucleotide biosynthesis. Catalyzes the first committed step in the biosynthesis of AMP from IMP. The polypeptide is Adenylosuccinate synthetase (Bifidobacterium longum (strain DJO10A)).